The sequence spans 247 residues: Capsid protein (247 aa).

The short motif at 3 to 20 (KRDAPWRLMAGTSKVSRS) is the Bipartite nuclear localization signal element. The short motif at 31 to 45 (KRDAWVNRPMYRKPR) is the Nuclear localization signal element. Positions 92-113 (ITHRVGKRFCVKSVYILGKIWM) match the Nuclear export signal motif. The Bipartite nuclear localization signal motif lies at 191–238 (RRFWKVNNNVVYNHQEAGKYENHTENALLLYMACTHASNPVYATLKIR).

This sequence belongs to the geminiviridae capsid protein family. In terms of assembly, homomultimer. Binds to single-stranded and double-stranded viral DNA. Interacts (via nuclear localization signals) with host importin alpha-1a.

It localises to the virion. Its subcellular location is the host nucleus. Functionally, encapsidates the viral DNA into characteristic twinned ('geminate') particles. Binds the genomic viral ssDNA and shuttles it into and out of the cell nucleus. The CP of bipartite geminiviruses is not required for cell-to-cell or systemic movement. In Solanum lycopersicum (Tomato), this protein is Capsid protein.